Here is a 309-residue protein sequence, read N- to C-terminus: Homoserine kinase (309 aa).

88-98 (PLARGLGSSAA) is a binding site for ATP.

Belongs to the GHMP kinase family. Homoserine kinase subfamily.

It localises to the cytoplasm. It carries out the reaction L-homoserine + ATP = O-phospho-L-homoserine + ADP + H(+). It functions in the pathway amino-acid biosynthesis; L-threonine biosynthesis; L-threonine from L-aspartate: step 4/5. In terms of biological role, catalyzes the ATP-dependent phosphorylation of L-homoserine to L-homoserine phosphate. This is Homoserine kinase from Halalkalibacterium halodurans (strain ATCC BAA-125 / DSM 18197 / FERM 7344 / JCM 9153 / C-125) (Bacillus halodurans).